Reading from the N-terminus, the 359-residue chain is tRNA N6-adenosine threonylcarbamoyltransferase (359 aa).

Residues H115 and H119 each contribute to the Fe cation site. Substrate-binding positions include 137–141 (LVSGG), D170, G183, and N283. Fe cation is bound at residue D311. The interval 328 to 359 (APDSLDIAPRSRWPLDEKSAPVFGTGRRGAKA) is disordered.

It belongs to the KAE1 / TsaD family. The cofactor is Fe(2+).

The protein resides in the cytoplasm. It catalyses the reaction L-threonylcarbamoyladenylate + adenosine(37) in tRNA = N(6)-L-threonylcarbamoyladenosine(37) in tRNA + AMP + H(+). In terms of biological role, required for the formation of a threonylcarbamoyl group on adenosine at position 37 (t(6)A37) in tRNAs that read codons beginning with adenine. Is involved in the transfer of the threonylcarbamoyl moiety of threonylcarbamoyl-AMP (TC-AMP) to the N6 group of A37, together with TsaE and TsaB. TsaD likely plays a direct catalytic role in this reaction. In Brucella melitensis biotype 2 (strain ATCC 23457), this protein is tRNA N6-adenosine threonylcarbamoyltransferase.